Consider the following 1285-residue polypeptide: Protein crumbs homolog 2 (1285 aa).

Residues 1–28 (MALARPGTPDPQALASVLLLLLWAPALS) form the signal peptide. The segment at 1–350 (MALARPGTPD…GFQCHCPDGY (350 aa)) is required for maximum inhibition of APP amyloid-beta peptide secretion. One can recognise an EGF-like 1 domain in the interval 67–106 (EPRGCATQPCHHGALCVPQGPDPTGFRCYCVPGFQGPRCE). Cystine bridges form between C71-C82, C76-C94, C96-C105, C112-C123, C117-C132, C134-C143, C150-C161, C155-C170, C172-C181, C188-C199, C193-C208, C210-C220, C227-C238, C232-C247, C249-C258, C265-C276, C270-C306, C308-C317, C324-C335, C329-C344, C346-C355, C362-C373, C367-C382, C384-C393, C400-C411, C405-C424, and C426-C435. Positions 108-144 (DIDECASRPCHHGATCRNLADRYECHCPLGYAGVTCE) constitute an EGF-like 2; calcium-binding domain. In terms of domain architecture, EGF-like 3; calcium-binding spans 146-182 (EVDECASAPCLHGGSCLDGVGSFRCVCAPGYGGTRCQ). One can recognise an EGF-like 4; calcium-binding domain in the interval 184 to 221 (DLDECQSQPCAHGGTCHDLVNGFRCDCAGTGYEGTHCE). 2 EGF-like domains span residues 223-259 (EVLECASAPCEHNASCLEGLGSFRCLCWPGYSGELCE) and 261-318 (DEDE…ADCG). N-linked (GlcNAc...) asparagine glycosylation occurs at N235. Residue S267 is glycosylated (O-linked (Glc...) serine). Residues 320 to 356 (EVDECASRPCLNGGHCQDLPNGFQCHCPDGYAGPTCE) enclose the EGF-like 7; calcium-binding domain. An EGF-like 8; calcium-binding domain is found at 358–394 (DVDECLSDPCLHGGTCSDTVAGYICRCPETWGGRDCS). The EGF-like 9 domain maps to 396–436 (QLTGCQGHTCPLAATCIPIFESGVHSYVCHCPPGTHGPFCG). The Laminin G-like 1 domain maps to 431–603 (HGPFCGQNTT…DLGENVLLGC (173 aa)). 2 N-linked (GlcNAc...) asparagine glycosylation sites follow: N438 and N478. 4 disulfide bridges follow: C579/C603, C609/C620, C614/C629, and C631/C640. Positions 605–641 (RREQCRPLPCVHGGSCVDLWTHFRCDCARPHRGPTCA) constitute an EGF-like 10 domain. The region spanning 647-805 (ATFGLGGAPS…RQSWNLTAGC (159 aa)) is the Laminin G-like 2 domain. N-linked (GlcNAc...) asparagine glycans are attached at residues N669, N690, N786, and N800. Cystine bridges form between C766–C805, C811–C822, C816–C831, and C833–C842. Residues 807 to 843 (SEDMCSPDPCFNGGTCLVTWNDFHCTCPANFTGPTCA) enclose the EGF-like 11 domain. 4 N-linked (GlcNAc...) asparagine glycosylation sites follow: N836, N886, N926, and N1009. In terms of domain architecture, Laminin G-like 3 spans 871-1054 (EATFREGPPA…PGTPAPILGC (184 aa)). Disulfide bonds link C1013/C1054, C1060/C1071, C1065/C1080, C1082/C1091, C1098/C1108, C1103/C1118, C1120/C1129, C1138/C1150, C1144/C1159, C1161/C1170, C1177/C1188, C1182/C1197, and C1199/C1208. 4 consecutive EGF-like domains span residues 1056–1092 (GAPVCAPSPCLHDGACRDLFDAFACACGPGWEGPRCE), 1094–1130 (HVDPCHSAPCARGRCHTHPDGRFECRCPPGFGGPRCR), 1134–1171 (PSKECSLNVTCLDGSPCEGGSPAANCSCLEGLAGQRCQ), and 1173–1209 (PTLPCEANPCLNGGTCRAAGGVSECICNARFSGQFCE). N1141 and N1158 each carry an N-linked (GlcNAc...) asparagine glycan. Residues 1225–1245 (VAVPAACACLLLLLLGLLSGI) traverse the membrane as a helical segment. The interval 1249 to 1285 (RKRRQSEGTYSPSQQEVAGARLEMDSVLKVPPEERLI) is interaction with EPB41L5.

This sequence belongs to the Crumbs protein family. In terms of assembly, associates with the gamma-secretase complex via interaction (via the transmembrane domain) with PSEN1/PS1. Interacts (via intracellular domain) with EPB41L5. Interacts with PALS1. O-glucosylated by POGLUT1 at Ser-267; consists of an O-glucose trisaccharide, in which the O-glucose is elongated by the addition of two xylose residues. O-glucosylation is required for localization at the plasma membrane. Post-translationally, N-glycosylated. In terms of tissue distribution, expressed in glomeruli, podocytes of the glomerular capillary loops, and parietal glomerular epithelial cells in the kidney (at protein level). Expressed in retina, fetal eye and brain. Also expressed in kidney, RPE/choroid, and at low levels in lung, placenta, and heart.

It localises to the apical cell membrane. Its subcellular location is the cytoplasm. The protein resides in the cell junction. It is found in the secreted. Functionally, apical polarity protein that plays a central role during the epithelial-to-mesenchymal transition (EMT) at gastrulation, when newly specified mesodermal cells move inside the embryo. Acts by promoting cell ingression, the process by which cells leave the epithelial epiblast and move inside the embryo to form a new tissue layer. The anisotropic distribution of CRB2 and MYH10/myosin-IIB at cell edges define which cells will ingress: cells with high apical CRB2 are probably extruded from the epiblast by neighboring cells with high levels of apical MYH10/myosin-IIB. Plays a role in the maintenance of retinal neuroepithelium organization, structural integrity, adhesion, photoreceptor polarity and retinal photoreceptor layer thickness. May play a role in determining the length of cone photoreceptor outer segments and proliferation of late-born progenitor cells. Also required for maintenance of the apical polarity complex during development of the cortex. Inhibits gamma-secretase-dependent cleavage of APP and secretion of amyloid-beta peptide 40 and amyloid-beta peptide 42, and thereby inhibits gamma-secretase-dependent Notch transcription. This is Protein crumbs homolog 2 from Homo sapiens (Human).